The sequence spans 153 residues: Vasotocin-neurophysin VT 1 (153 aa).

The signal sequence occupies residues 1 to 20; sequence MPYSTFPLLWVLGLLALSSA. A disulfide bridge connects residues cysteine 21 and cysteine 26. Glycine 29 bears the Glycine amide mark. 7 disulfide bridges follow: cysteine 41-cysteine 85, cysteine 44-cysteine 58, cysteine 52-cysteine 75, cysteine 59-cysteine 65, cysteine 92-cysteine 104, cysteine 98-cysteine 116, and cysteine 105-cysteine 110.

The protein belongs to the vasopressin/oxytocin family. Seven disulfide bonds are present in neurophysin.

The protein resides in the secreted. Functionally, vasotocin is an antidiuretic hormone. This Oncorhynchus keta (Chum salmon) protein is Vasotocin-neurophysin VT 1.